We begin with the raw amino-acid sequence, 492 residues long: Glutamyl-tRNA(Gln) amidotransferase subunit A (492 aa).

Residues lysine 79 and serine 154 each act as charge relay system in the active site. Serine 178 acts as the Acyl-ester intermediate in catalysis.

This sequence belongs to the amidase family. GatA subfamily. Heterotrimer of A, B and C subunits.

It carries out the reaction L-glutamyl-tRNA(Gln) + L-glutamine + ATP + H2O = L-glutaminyl-tRNA(Gln) + L-glutamate + ADP + phosphate + H(+). Its function is as follows. Allows the formation of correctly charged Gln-tRNA(Gln) through the transamidation of misacylated Glu-tRNA(Gln) in organisms which lack glutaminyl-tRNA synthetase. The reaction takes place in the presence of glutamine and ATP through an activated gamma-phospho-Glu-tRNA(Gln). The chain is Glutamyl-tRNA(Gln) amidotransferase subunit A from Acinetobacter baumannii (strain ATCC 17978 / DSM 105126 / CIP 53.77 / LMG 1025 / NCDC KC755 / 5377).